The following is a 157-amino-acid chain: Peptide methionine sulfoxide reductase MsrA (157 aa).

Cys10 is an active-site residue.

The protein belongs to the MsrA Met sulfoxide reductase family.

The enzyme catalyses L-methionyl-[protein] + [thioredoxin]-disulfide + H2O = L-methionyl-(S)-S-oxide-[protein] + [thioredoxin]-dithiol. It carries out the reaction [thioredoxin]-disulfide + L-methionine + H2O = L-methionine (S)-S-oxide + [thioredoxin]-dithiol. Its function is as follows. Has an important function as a repair enzyme for proteins that have been inactivated by oxidation. Catalyzes the reversible oxidation-reduction of methionine sulfoxide in proteins to methionine. This is Peptide methionine sulfoxide reductase MsrA from Clostridium perfringens (strain ATCC 13124 / DSM 756 / JCM 1290 / NCIMB 6125 / NCTC 8237 / Type A).